Consider the following 122-residue polypeptide: Large ribosomal subunit protein uL14 (122 aa).

The protein belongs to the universal ribosomal protein uL14 family. As to quaternary structure, part of the 50S ribosomal subunit. Forms a cluster with proteins L3 and L19. In the 70S ribosome, L14 and L19 interact and together make contacts with the 16S rRNA in bridges B5 and B8.

Its function is as follows. Binds to 23S rRNA. Forms part of two intersubunit bridges in the 70S ribosome. The chain is Large ribosomal subunit protein uL14 from Lacticaseibacillus casei (strain BL23) (Lactobacillus casei).